The following is a 171-amino-acid chain: Large ribosomal subunit protein bL9 (171 aa).

This sequence belongs to the bacterial ribosomal protein bL9 family.

Functionally, binds to the 23S rRNA. The sequence is that of Large ribosomal subunit protein bL9 from Orientia tsutsugamushi (strain Ikeda) (Rickettsia tsutsugamushi).